The chain runs to 1822 residues: ADP-ribosylation factor guanine nucleotide-exchange factor sec72 (1822 aa).

Disordered stretches follow at residues Met1 to Asp54 and Asp66 to Leu126. Ser44 carries the phosphoserine modification. Positions Asp72 to Lys84 are enriched in polar residues. A compositionally biased stretch (basic and acidic residues) spans Gln85–Asn110. Phosphoserine is present on residues Ser122 and Ser125. The HUS box signature appears at Asn547–Asp551. Thr597 carries the phosphothreonine modification. Ser653 is subject to Phosphoserine. Thr654 is subject to Phosphothreonine. Ser669 carries the post-translational modification Phosphoserine. The SEC7 domain occupies Gln701–Asn889. Residues Glu898–Asn1106 are HDS1 domain. The residue at position 1110 (Ser1110) is a Phosphoserine. Disordered stretches follow at residues Asn1111–Lys1131 and Glu1584–Ile1610. 2 stretches are compositionally biased toward low complexity: residues Ser1117 to Ser1130 and Ser1597 to Ile1610. 2 positions are modified to phosphoserine: Ser1606 and Ser1609.

The protein localises to the cytoplasm. Its subcellular location is the golgi apparatus. It is found in the trans-Golgi network. It localises to the cytoplasmic vesicle. The protein resides in the COPI-coated vesicle membrane. The protein localises to the COPII-coated vesicle membrane. Its function is as follows. Guanine exchange factor that acts as an activator of arf1 at the trans-Golgi net-work and is thus involved in vesicular budding and traffic between compartments of the Golgi apparatus. Activation of Arf (ADP-ribosylation factor) GTPases is essential for vesicle formation via recruitment of cargo adapters and coat proteins necessary for Golgi trafficking. Involved in the resistance to tamoxifen (TAM), an anticancer drug used to treat estrogen receptor (ER)-positive breast cancer. This is ADP-ribosylation factor guanine nucleotide-exchange factor sec72 from Schizosaccharomyces pombe (strain 972 / ATCC 24843) (Fission yeast).